The primary structure comprises 333 residues: Protein APEM9 (333 aa).

Residues 1 to 90 (MEATDIWGEI…ELRDVFGEVA (90 aa)) are Cytoplasmic-facing. Residues 91 to 102 (AIPVQVLLTGVC) form a helical membrane-spanning segment. The Peroxisomal segment spans residues 103–268 (LQISNGSYLG…KVGNTQFSMS (166 aa)). A helical membrane pass occupies residues 269–285 (RGKVAVSLVGLIICYAL). Residues 286–333 (KRKRAALIRIIRRQMESTRKAIVDFWKLAFSYQVNPLAAIQSIPSTTT) lie on the Cytoplasmic side of the membrane.

As to quaternary structure, interacts with PEX6 and PEX19-1, but not with PEX1. Interacts (via N-terminus) with PEX13, and (via N-terminus and C-terminus) with PEX16. As to expression, expressed in roots, leaves, stems, flowers, buds and fruits.

It is found in the peroxisome membrane. Its function is as follows. Involved in peroxisome biogenesis and matrix protein import. Required for pollen maturation and in vivo germination via its role in peroxisomal function, which partially involves jasmonic acid biosynthesis. Transported to peroxisomes via the interaction with PEX19-1. Required for peroxisomal protein import by acting as an anchoring protein for the AAA ATPase complex, which consists of PEX1 and PEX6. The protein is Protein APEM9 of Arabidopsis thaliana (Mouse-ear cress).